We begin with the raw amino-acid sequence, 339 residues long: Endo-beta-N-acetylglucosaminidase F1 (339 aa).

The or 51, or 52 signal peptide spans 1–50; that stretch reads MKKFINQFSASLKNNILVFLAFPFVWTSCARDNPLSSENSNISPNAAARA. Positions 60-326 constitute a GH18 domain; it reads IKLFSFTEVN…KLIAKELYGD (267 aa). E182 acts as the Proton donor in catalysis. Residue W339 is a propeptide, removed in mature form.

The protein belongs to the glycosyl hydrolase 18 family. As to quaternary structure, monomer.

Its subcellular location is the secreted. It catalyses the reaction an N(4)-(oligosaccharide-(1-&gt;3)-[oligosaccharide-(1-&gt;6)]-beta-D-Man-(1-&gt;4)-beta-D-GlcNAc-(1-&gt;4)-alpha-D-GlcNAc)-L-asparaginyl-[protein] + H2O = an oligosaccharide-(1-&gt;3)-[oligosaccharide-(1-&gt;6)]-beta-D-Man-(1-&gt;4)-D-GlcNAc + N(4)-(N-acetyl-beta-D-glucosaminyl)-L-asparaginyl-[protein]. Its function is as follows. Endohydrolysis of the di-N-acetylchitobiosyl unit in high-mannose glycopeptides and glycoproteins. Does not hydrolyze complex bi- or triantennary glycans. The presence of a core-bound fucose impedes endo F1 hydrolysis. In Elizabethkingia meningoseptica (Chryseobacterium meningosepticum), this protein is Endo-beta-N-acetylglucosaminidase F1 (endOF1).